A 152-amino-acid chain; its full sequence is Protein SprT-like (152 aa).

A SprT-like domain is found at 7–148 (QRLVEEVSLQ…GKCKGKLILI (142 aa)). Histidine 67 is a binding site for Zn(2+). The active site involves glutamate 68. Histidine 71 is a binding site for Zn(2+).

This sequence belongs to the SprT family. The cofactor is Zn(2+).

It localises to the cytoplasm. The protein is Protein SprT-like of Bacillus cereus (strain AH187).